Reading from the N-terminus, the 469-residue chain is MHSFPPLLLLLFWGVVSHSFPATLETQEQDVDLVQKYLEKYYNLKNDGRQVEKRRNSGPVVEKLKQMQEFFGLKVTGKPDAETLKVMKQPRCGVPDVAQFVLTEGNPRWEQTHLTYRIENYTPDLPRADVDHAIEKAFQLWSNVTPLTFTKVSEGQADIMISFVRGDHRDNSPFDGPGGNLAHAFQPGPGIGGDAHFDEDERWTNNFREYNLHRVAAHELGHSLGLSHSTDIGALMYPSYTFSGDVQLAQDDIDGIQAIYGRSQNPVQPIGPQTPKACDSKLTFDAITTIRGEVMFFKDRFYMRTNPFYPEVELNFISVFWPQLPNGLEAAYEFADRDEVRFFKGNKYWAVQGQNVLHGYPKDIYSSFGFPRTVKHIDAALSEENTGKTYFFVANKYWRYDEYKRSMDPGYPKMIAHDFPGIGHKVDAVFMKDGFFYFFHGTRQYKFDPKTKRILTLQKANSWFNCRKN.

An N-terminal signal peptide occupies residues 1 to 19; sequence MHSFPPLLLLLFWGVVSHS. Positions 20–99 are cleaved as a propeptide — activation peptide; it reads FPATLETQEQ…PRCGVPDVAQ (80 aa). Serine 57 is modified (phosphoserine). Residues 90–97 carry the Cysteine switch motif; that stretch reads PRCGVPDV. Cysteine 92 lines the Zn(2+) pocket. A metalloprotease region spans residues 98 to 276; that stretch reads AQFVLTEGNP…VQPIGPQTPK (179 aa). N-linked (GlcNAc...) asparagine glycosylation occurs at asparagine 120. The Ca(2+) site is built by aspartate 124 and aspartate 158. Residues histidine 168 and aspartate 170 each contribute to the Zn(2+) site. Residues aspartate 175, glycine 176, glycine 178, and asparagine 180 each contribute to the Ca(2+) site. Histidine 183 contacts Zn(2+). Glycine 190, glycine 192, and aspartate 194 together coordinate Ca(2+). Histidine 196 is a binding site for Zn(2+). Aspartate 198, glutamate 199, and glutamate 201 together coordinate Ca(2+). Histidine 218 contributes to the Zn(2+) binding site. The active site involves glutamate 219. Residues histidine 222 and histidine 228 each coordinate Zn(2+). Threonine 274 is subject to Phosphothreonine. Hemopexin repeat units follow at residues 275–324, 325–371, 374–422, and 423–466; these read PKAC…WPQL, PNGL…FGFP, VKHI…FPGI, and GHKV…WFNC. Cysteines 278 and 466 form a disulfide. 2 residues coordinate Ca(2+): aspartate 285 and glutamate 329. Tyrosine 360 bears the Phosphotyrosine; by PKDCC mark. Residues aspartate 378 and aspartate 427 each contribute to the Ca(2+) site.

It belongs to the peptidase M10A family. As to quaternary structure, (Microbial infection) Interacts with HIV-1 Tat. The cofactor is Ca(2+). Zn(2+) is required as a cofactor. Post-translationally, undergoes autolytic cleavage to two major forms (22 kDa and 27 kDa). A minor form (25 kDa) is the glycosylated form of the 22 kDa form. The 27 kDa form has no activity while the 22/25 kDa form can act as activator for collagenase. Tyrosine phosphorylated in platelets by PKDCC/VLK.

It is found in the secreted. The protein resides in the extracellular space. It localises to the extracellular matrix. The catalysed reaction is Cleavage of the triple helix of collagen at about three-quarters of the length of the molecule from the N-terminus, at 775-Gly-|-Ile-776 in the alpha1(I) chain. Cleaves synthetic substrates and alpha-macroglobulins at bonds where P1' is a hydrophobic residue.. Its activity is regulated as follows. Can be activated without removal of the activation peptide. Cleaves collagens of types I, II, and III at one site in the helical domain. Also cleaves collagens of types VII and X. In case of HIV infection, interacts and cleaves the secreted viral Tat protein, leading to a decrease in neuronal Tat's mediated neurotoxicity. In Homo sapiens (Human), this protein is Interstitial collagenase (MMP1).